The sequence spans 495 residues: Lysine--tRNA ligase (495 aa).

2 residues coordinate Mg(2+): Glu406 and Glu413.

The protein belongs to the class-II aminoacyl-tRNA synthetase family. Homodimer. Mg(2+) is required as a cofactor.

The protein resides in the cytoplasm. The enzyme catalyses tRNA(Lys) + L-lysine + ATP = L-lysyl-tRNA(Lys) + AMP + diphosphate. In Leptospira interrogans serogroup Icterohaemorrhagiae serovar copenhageni (strain Fiocruz L1-130), this protein is Lysine--tRNA ligase.